Here is a 467-residue protein sequence, read N- to C-terminus: ATP synthase subunit beta (467 aa).

Residue 152 to 159 coordinates ATP; the sequence is GGAGVGKT.

The protein belongs to the ATPase alpha/beta chains family. F-type ATPases have 2 components, CF(1) - the catalytic core - and CF(0) - the membrane proton channel. CF(1) has five subunits: alpha(3), beta(3), gamma(1), delta(1), epsilon(1). CF(0) has three main subunits: a(1), b(2) and c(9-12). The alpha and beta chains form an alternating ring which encloses part of the gamma chain. CF(1) is attached to CF(0) by a central stalk formed by the gamma and epsilon chains, while a peripheral stalk is formed by the delta and b chains.

The protein localises to the cell membrane. The enzyme catalyses ATP + H2O + 4 H(+)(in) = ADP + phosphate + 5 H(+)(out). In terms of biological role, produces ATP from ADP in the presence of a proton gradient across the membrane. The catalytic sites are hosted primarily by the beta subunits. The sequence is that of ATP synthase subunit beta from Caldicellulosiruptor saccharolyticus (strain ATCC 43494 / DSM 8903 / Tp8T 6331).